The primary structure comprises 496 residues: Probable cytosol aminopeptidase (496 aa).

Residues Lys-268 and Asp-273 each contribute to the Mn(2+) site. Lys-280 is a catalytic residue. Asp-291, Asp-350, and Glu-352 together coordinate Mn(2+). Residue Arg-354 is part of the active site.

The protein belongs to the peptidase M17 family. Mn(2+) is required as a cofactor.

It localises to the cytoplasm. The catalysed reaction is Release of an N-terminal amino acid, Xaa-|-Yaa-, in which Xaa is preferably Leu, but may be other amino acids including Pro although not Arg or Lys, and Yaa may be Pro. Amino acid amides and methyl esters are also readily hydrolyzed, but rates on arylamides are exceedingly low.. The enzyme catalyses Release of an N-terminal amino acid, preferentially leucine, but not glutamic or aspartic acids.. Presumably involved in the processing and regular turnover of intracellular proteins. Catalyzes the removal of unsubstituted N-terminal amino acids from various peptides. The chain is Probable cytosol aminopeptidase from Thioalkalivibrio sulfidiphilus (strain HL-EbGR7).